Consider the following 951-residue polypeptide: Zinc fingers and homeoboxes protein 3 (951 aa).

A disordered region spans residues 1–66; that stretch reads MASKRKSTTP…SSTDGSALAN (66 aa). Residues 42–58 are compositionally biased toward low complexity; sequence PSEAPEASSEAAPNPSS. 2 C2H2-type zinc fingers span residues 77–100 and 109–132; these read YSCKECDFRSQDVTHFVGHMTSEH and FVCTGCSFLAKTPEGLSLHNAKCH. The tract at residues 198 to 249 is disordered; sequence KENAPTQPGGEALPKPLAGETEGKEGDHTFINGATPVSQASANSTKPPHTAN. The span at 232-244 shows a compositional bias: polar residues; it reads TPVSQASANSTKP. The segment at 237–481 is required for homodimerization and interaction with NFYA; the sequence is ASANSTKPPH…LLTACPSITS (245 aa). The required for repressor activity stretch occupies residues 297-495; it reads LSSIPTYNAA…DANIYKNKKS (199 aa). DNA-binding regions (homeobox) lie at residues 298-357 and 487-546; these read SSIP…GISW and ANIY…RNLK. A required for nuclear localization region spans residues 490 to 548; sequence YKNKKSHEQLSALKGSFCRNQFPGQSEVEHLTKVTGLSTREVRKWFSDRRYHCRNLKGT. Ser597 carries the phosphoserine modification. A DNA-binding region (homeobox 3) is located at residues 605-664; it reads TPTKYKERAPEQLRVLESSFAQNPLPPEEELDRLRSETKMTRREIDGWFSERRKRVNAEE. Disordered regions lie at residues 621 to 642 and 661 to 702; these read ESSFAQNPLPPEEELDRLRSET and NAEE…NGSS. Over residues 661 to 674 the composition is skewed to basic and acidic residues; the sequence is NAEETKKADGHAPQ. Over residues 675–690 the composition is skewed to acidic residues; it reads EEAEGAEEEGRDEELA. A phosphoserine mark is found at Ser701 and Ser716. 2 DNA-binding regions (homeobox) span residues 759–818 and 830–889; these read PSRV…KNGQ and FPPG…TRAV. Positions 885–951 are disordered; that stretch reads ETRAVADTSS…PQSGRQLETD (67 aa). Ser922 and Ser941 each carry phosphoserine. Positions 937–951 are enriched in polar residues; it reads FDTSSPQSGRQLETD.

It belongs to the ZHX family. As to quaternary structure, homodimer (via homeobox domain 1). Heterodimer with ZHX1 (via homeobox domain 1). Heterodimer with ZHX2 (via homeobox domain 1). Heterodimerization with ZHX1 is a prerequisite for repressor activity. Interacts with NFYA. As to expression, widely expressed.

The protein localises to the cytoplasm. It is found in the nucleus. Functionally, acts as a transcriptional repressor. Involved in the early stages of mesenchymal stem cell (MSC) osteogenic differentiation. Is a regulator of podocyte gene expression during primary glomerula disease. Binds to promoter DNA. The chain is Zinc fingers and homeoboxes protein 3 (Zhx3) from Rattus norvegicus (Rat).